The primary structure comprises 345 residues: Glycerol-3-phosphate dehydrogenase [NAD(P)+] (345 aa).

4 residues coordinate NADPH: S23, Y24, H44, and K118. K118, G147, and T149 together coordinate sn-glycerol 3-phosphate. A151 contacts NADPH. Residues K203, D256, S266, R267, and N268 each coordinate sn-glycerol 3-phosphate. K203 functions as the Proton acceptor in the catalytic mechanism. NADPH is bound at residue R267. 2 residues coordinate NADPH: V291 and E293.

The protein belongs to the NAD-dependent glycerol-3-phosphate dehydrogenase family.

The protein localises to the cytoplasm. The catalysed reaction is sn-glycerol 3-phosphate + NAD(+) = dihydroxyacetone phosphate + NADH + H(+). It carries out the reaction sn-glycerol 3-phosphate + NADP(+) = dihydroxyacetone phosphate + NADPH + H(+). It participates in membrane lipid metabolism; glycerophospholipid metabolism. Its function is as follows. Catalyzes the reduction of the glycolytic intermediate dihydroxyacetone phosphate (DHAP) to sn-glycerol 3-phosphate (G3P), the key precursor for phospholipid synthesis. The chain is Glycerol-3-phosphate dehydrogenase [NAD(P)+] from Vibrio vulnificus (strain CMCP6).